A 337-amino-acid polypeptide reads, in one-letter code: Glyceraldehyde-3-phosphate dehydrogenase (337 aa).

Residues 12 to 13 (RI), D34, and R79 contribute to the NAD(+) site. D-glyceraldehyde 3-phosphate-binding positions include 150 to 152 (SCT), T181, 210 to 211 (TG), and R233. C151 acts as the Nucleophile in catalysis. N315 serves as a coordination point for NAD(+).

Belongs to the glyceraldehyde-3-phosphate dehydrogenase family. Homotetramer.

Its subcellular location is the cytoplasm. It catalyses the reaction D-glyceraldehyde 3-phosphate + phosphate + NAD(+) = (2R)-3-phospho-glyceroyl phosphate + NADH + H(+). Its pathway is carbohydrate degradation; glycolysis; pyruvate from D-glyceraldehyde 3-phosphate: step 1/5. This is Glyceraldehyde-3-phosphate dehydrogenase (GPD) from Ajellomyces capsulatus (Darling's disease fungus).